Consider the following 344-residue polypeptide: Ketol-acid reductoisomerase (NADP(+)) (344 aa).

One can recognise a KARI N-terminal Rossmann domain in the interval Met1 to Thr181. Residues Tyr25 to Gln28, Arg48, Ser52, and Asp82 to Gln85 each bind NADP(+). Residue His107 is part of the active site. An NADP(+)-binding site is contributed by Gly133. In terms of domain architecture, KARI C-terminal knotted spans Thr182–Ile327. 4 residues coordinate Mg(2+): Asp190, Glu194, Glu226, and Glu230. Residue Ser251 participates in substrate binding.

This sequence belongs to the ketol-acid reductoisomerase family. Mg(2+) serves as cofactor.

The catalysed reaction is (2R)-2,3-dihydroxy-3-methylbutanoate + NADP(+) = (2S)-2-acetolactate + NADPH + H(+). It carries out the reaction (2R,3R)-2,3-dihydroxy-3-methylpentanoate + NADP(+) = (S)-2-ethyl-2-hydroxy-3-oxobutanoate + NADPH + H(+). It functions in the pathway amino-acid biosynthesis; L-isoleucine biosynthesis; L-isoleucine from 2-oxobutanoate: step 2/4. It participates in amino-acid biosynthesis; L-valine biosynthesis; L-valine from pyruvate: step 2/4. Its function is as follows. Involved in the biosynthesis of branched-chain amino acids (BCAA). Catalyzes an alkyl-migration followed by a ketol-acid reduction of (S)-2-acetolactate (S2AL) to yield (R)-2,3-dihydroxy-isovalerate. In the isomerase reaction, S2AL is rearranged via a Mg-dependent methyl migration to produce 3-hydroxy-3-methyl-2-ketobutyrate (HMKB). In the reductase reaction, this 2-ketoacid undergoes a metal-dependent reduction by NADPH to yield (R)-2,3-dihydroxy-isovalerate. This is Ketol-acid reductoisomerase (NADP(+)) from Lysinibacillus sphaericus (strain C3-41).